The chain runs to 458 residues: MGSSNLNINSKITDIFAYQVFDSRGVPTVACVVKLASGHVGEAMVPSGASTGEKEAIELRDNDPKNYFGKGVNEAVDNVNKVIAPKLIGLNAFDQLTVDQAMIKLDNTPNKAKLGANAILSVSLAVSKAAAKAQNSSLFQYISNKLIGLNTTNFVLPVPMLNVINGGAHADNYIDFQEFMIMPLGAKKMHEALKMASETFHALQNLLKKRGLNTNKGDEGGFAPNLKLAEDALDIMVEAIKLAGYKPWDDIAIAIDVAASEFYDEDKKLYVFKKGIKANILNAKDWSLTSKEMIAYLEKLTKKYPIISIEDGLSENDWEGMNQLTKTIGSHIQIVGDDTYCTNAELAKKGVAQNTTNSILIKLNQIGSISETIQTIEVAKKANWSQVISHRSGETEDTTIADLAVAAQTGQIKTGSMSRSERIAKYNRLLYIEIELGDKGKYLGWNTFTNIKPKNFNI.

Gln177 is a (2R)-2-phosphoglycerate binding site. Glu219 serves as the catalytic Proton donor. Residues Asp256, Glu310, and Asp337 each contribute to the Mg(2+) site. 4 residues coordinate (2R)-2-phosphoglycerate: Lys362, Arg391, Ser392, and Lys413. Lys362 functions as the Proton acceptor in the catalytic mechanism.

This sequence belongs to the enolase family. Mg(2+) serves as cofactor.

It localises to the cytoplasm. Its subcellular location is the secreted. The protein localises to the cell surface. The catalysed reaction is (2R)-2-phosphoglycerate = phosphoenolpyruvate + H2O. It participates in carbohydrate degradation; glycolysis; pyruvate from D-glyceraldehyde 3-phosphate: step 4/5. In terms of biological role, catalyzes the reversible conversion of 2-phosphoglycerate (2-PG) into phosphoenolpyruvate (PEP). It is essential for the degradation of carbohydrates via glycolysis. This Mycoplasma genitalium (strain ATCC 33530 / DSM 19775 / NCTC 10195 / G37) (Mycoplasmoides genitalium) protein is Enolase.